The sequence spans 723 residues: Probable G-protein coupled receptor 149 (723 aa).

Residues 1-31 are Extracellular-facing; that stretch reads MSVMPSNLSLNGTSFFAENHSIMDKPNEQRT. N-linked (GlcNAc...) asparagine glycosylation is found at N7, N11, and N19. The chain crosses the membrane as a helical span at residues 32-52; the sequence is LNVFLFCSTFIIAFTVLLGSI. At 53-69 the chain is on the cytoplasmic side; the sequence is YSLVSLLKLQNKSTISM. The helical transmembrane segment at 70 to 90 threads the bilayer; it reads IVTSLSIDDLISIVPVIIFML. The Extracellular segment spans residues 91–106; it reads TQWSSDALPQPLCTTS. Residues C103 and C181 are joined by a disulfide bond. A helical transmembrane segment spans residues 107-127; sequence ALIYLFQGISSNLKGSLIVSY. Residues 128 to 148 lie on the Cytoplasmic side of the membrane; it reads NFYSINKTETMNCSASKRRVS. A helical transmembrane segment spans residues 149 to 169; sequence MVWAILSIWIVSLLICILPLC. Over 170 to 188 the chain is Extracellular; it reads GWGKYIPTTWGCFTDHASS. Residues 189-209 traverse the membrane as a helical segment; it reads YILFLFIVYSLCFCLLTVLSV. The Cytoplasmic portion of the chain corresponds to 210 to 306; the sequence is PLTYQLLCSD…SFTVGFAQKR (97 aa). A helical transmembrane segment spans residues 307–327; the sequence is FSLILALTKVILWLPMMIQMV. Over 328–338 the chain is Extracellular; the sequence is VQHITGYQSFS. The helical transmembrane segment at 339 to 359 threads the bilayer; the sequence is FETLSFLLTLLAATVTPVFVL. The Cytoplasmic segment spans residues 360-723; that stretch reads SEHWIHLPCG…RKREEDGNSN (364 aa). The interval 451–513 is disordered; the sequence is TTDSARPGPA…ERRLSHEEGH (63 aa). The segment covering 501–513 has biased composition (basic and acidic residues); the sequence is EGPERRLSHEEGH.

Belongs to the G-protein coupled receptor 1 family. In terms of tissue distribution, specific expression in peripheral nervous system, including nerve growth factor-dependent sensory and sympathetic neurons, as well as enteric neurons.

The protein resides in the cell membrane. Orphan receptor. This is Probable G-protein coupled receptor 149 (GPR149) from Gallus gallus (Chicken).